The following is a 349-amino-acid chain: Heparin sulfate O-sulfotransferase (349 aa).

The Cytoplasmic portion of the chain corresponds to 1–17 (MFRKLLKMWILLRPTHW). A helical; Signal-anchor for type II membrane protein transmembrane segment spans residues 18–38 (LILIALCAVTCAGYWLLWSEI). The Lumenal portion of the chain corresponds to 39–349 (RLEHAFKPLS…KFMYEKIRPK (311 aa)). N-linked (GlcNAc...) asparagine glycans are attached at residues N107 and N126. Residues H139 and H141 contribute to the active site. Cystine bridges form between C200/C208 and C221/C227. N282 is a glycosylation site (N-linked (GlcNAc...) asparagine).

The protein belongs to the sulfotransferase 3 family. As to quaternary structure, homotrimer.

It localises to the golgi apparatus membrane. Its function is as follows. Catalyzes the transfer of sulfate to the C2-position of selected hexuronic acid residues within the maturing heparan sulfate (HS). The sequence is that of Heparin sulfate O-sulfotransferase from Drosophila melanogaster (Fruit fly).